The following is a 179-amino-acid chain: Nucleoside-triphosphatase THEP1 (179 aa).

ATP is bound by residues 7–14 (GMPGVGKT) and 98–105 (IIIIDEIG).

Belongs to the THEP1 NTPase family.

The enzyme catalyses a ribonucleoside 5'-triphosphate + H2O = a ribonucleoside 5'-diphosphate + phosphate + H(+). Has nucleotide phosphatase activity towards ATP, GTP, CTP, TTP and UTP. May hydrolyze nucleoside diphosphates with lower efficiency. The chain is Nucleoside-triphosphatase THEP1 from Pyrococcus abyssi (strain GE5 / Orsay).